The primary structure comprises 235 residues: Purine nucleoside phosphorylase DeoD-type (235 aa).

His-4 contacts a purine D-ribonucleoside. Phosphate is bound by residues Gly-20, Arg-24, Arg-43, and 87–90; that span reads RVGT. A purine D-ribonucleoside contacts are provided by residues 179-181 and 203-204; these read EME and SD. Asp-204 functions as the Proton donor in the catalytic mechanism.

It belongs to the PNP/UDP phosphorylase family. Homohexamer; trimer of homodimers.

It carries out the reaction a purine D-ribonucleoside + phosphate = a purine nucleobase + alpha-D-ribose 1-phosphate. The enzyme catalyses a purine 2'-deoxy-D-ribonucleoside + phosphate = a purine nucleobase + 2-deoxy-alpha-D-ribose 1-phosphate. Functionally, catalyzes the reversible phosphorolytic breakdown of the N-glycosidic bond in the beta-(deoxy)ribonucleoside molecules, with the formation of the corresponding free purine bases and pentose-1-phosphate. This is Purine nucleoside phosphorylase DeoD-type from Clostridium perfringens (strain ATCC 13124 / DSM 756 / JCM 1290 / NCIMB 6125 / NCTC 8237 / Type A).